We begin with the raw amino-acid sequence, 226 residues long: Amelogenin (226 aa).

The N-terminal stretch at 1–16 is a signal peptide; it reads MGTWILFACLLGTAFA. Ser32 is subject to Phosphoserine. Residues 86–196 form a disordered region; it reads QQHPPSHTTL…LPPQQALPPM (111 aa). Composition is skewed to low complexity over residues 88–120 and 137–182; these read HPPS…MPVP and PTSQ…SPLH. Residues 183-192 are compositionally biased toward pro residues; it reads PIQPLPPQQA.

It belongs to the amelogenin family.

The protein localises to the secreted. It localises to the extracellular space. The protein resides in the extracellular matrix. Plays a role in the biomineralization of teeth. Seems to regulate the formation of crystallites during the secretory stage of tooth enamel development. Thought to play a major role in the structural organization and mineralization of developing enamel. The chain is Amelogenin (AMEL) from Cavia porcellus (Guinea pig).